Reading from the N-terminus, the 315-residue chain is Transaldolase (315 aa).

Lys-125 serves as the catalytic Schiff-base intermediate with substrate.

The protein belongs to the transaldolase family. Type 1 subfamily. As to quaternary structure, homodimer.

It localises to the cytoplasm. It catalyses the reaction D-sedoheptulose 7-phosphate + D-glyceraldehyde 3-phosphate = D-erythrose 4-phosphate + beta-D-fructose 6-phosphate. The protein operates within carbohydrate degradation; pentose phosphate pathway; D-glyceraldehyde 3-phosphate and beta-D-fructose 6-phosphate from D-ribose 5-phosphate and D-xylulose 5-phosphate (non-oxidative stage): step 2/3. Functionally, transaldolase is important for the balance of metabolites in the pentose-phosphate pathway. The polypeptide is Transaldolase (Polaromonas naphthalenivorans (strain CJ2)).